The sequence spans 360 residues: Peptide chain release factor 1 (360 aa).

Gln235 is modified (N5-methylglutamine).

It belongs to the prokaryotic/mitochondrial release factor family. Methylated by PrmC. Methylation increases the termination efficiency of RF1.

Its subcellular location is the cytoplasm. Its function is as follows. Peptide chain release factor 1 directs the termination of translation in response to the peptide chain termination codons UAG and UAA. The polypeptide is Peptide chain release factor 1 (Leptothrix cholodnii (strain ATCC 51168 / LMG 8142 / SP-6) (Leptothrix discophora (strain SP-6))).